The sequence spans 161 residues: uncharacterized protein (161 aa).

This is an uncharacterized protein from Schizosaccharomyces pombe (strain 972 / ATCC 24843) (Fission yeast).